We begin with the raw amino-acid sequence, 255 residues long: MSTREENVYMAKLAEQAERYEEMVEFMEKVAKTVDVEELSVEERNLLSVAYKNVIGARRASWRIISSIEQKEESKGNEDHVAIIKDYRGKIESELSKICDGILNVLEAHLIPSASPAESKVFYLKMKGDYHRYLAEFKAGAERKEAAESTLVAYKSASDIATAELAPTHPIRLGLALNFSVFYYEILNSPDRACSLAKQAFDDAIAELDTLGEESYKDSTLIMQLLRDNLTLWTSDMTDEAGDEIKEASKPDGAE.

Residue Ser66 is modified to Phosphoserine. A Phosphothreonine modification is found at Thr162. Ser189 bears the Phosphoserine mark. Thr210 and Thr238 each carry phosphothreonine.

This sequence belongs to the 14-3-3 family. Component of a DNA binding complex that binds to the G box. Interacts with IDH3, AGT3, GLN1-1, GLN1-2, GLN1-4, SAM1, SAM2, MDH1, METK3 and MDH2. Binds to 1-aminocyclopropane-1-carboxylate synthases (ACS) such as ACS2, ACS5, ACS6, ACS8, and ACS11. Interacts with FD. Interacts with DREB1A and DREB1B in the nucleus. Interacts with CINV1.

The protein localises to the cytoplasm. It is found in the nucleus. Its function is as follows. Is associated with a DNA binding complex that binds to the G box, a well-characterized cis-acting DNA regulatory element found in plant genes. Involved in the regulation of nutrient metabolism. Reciprocal negative transcription regulation of miR396. Negative regulator of constitutive freezing tolerance and cold acclimation by controlling cold-induced gene expression partially through an ethylene (ET)-dependent pathway; prevents ethylene (ET) biosynthesis, probably by binding 1-aminocyclopropane-1-carboxylate synthases (ACS) to reduce their stability, thus contributing to establish adequate ET levels under both standard and low-temperature conditions. This Arabidopsis thaliana (Mouse-ear cress) protein is 14-3-3-like protein GF14 psi.